A 217-amino-acid polypeptide reads, in one-letter code: Outer-membrane lipoprotein LolB (217 aa).

An N-terminal signal peptide occupies residues Met1–Ala20. A lipid anchor (N-palmitoyl cysteine) is attached at Cys21. Residue Cys21 is the site of S-diacylglycerol cysteine attachment.

It belongs to the LolB family. In terms of assembly, monomer.

The protein localises to the cell outer membrane. In terms of biological role, plays a critical role in the incorporation of lipoproteins in the outer membrane after they are released by the LolA protein. This chain is Outer-membrane lipoprotein LolB, found in Xanthomonas euvesicatoria pv. vesicatoria (strain 85-10) (Xanthomonas campestris pv. vesicatoria).